Here is a 64-residue protein sequence, read N- to C-terminus: uncharacterized protein (64 aa).

This is an uncharacterized protein from Methanothermobacter thermautotrophicus (strain ATCC 29096 / DSM 1053 / JCM 10044 / NBRC 100330 / Delta H) (Methanobacterium thermoautotrophicum).